We begin with the raw amino-acid sequence, 361 residues long: Chorismate synthase (361 aa).

The NADP(+) site is built by R48 and R54. FMN-binding positions include 125–127 (RSS), 238–239 (NA), G278, 293–297 (KPTSS), and R319.

Belongs to the chorismate synthase family. Homotetramer. FMNH2 is required as a cofactor.

The catalysed reaction is 5-O-(1-carboxyvinyl)-3-phosphoshikimate = chorismate + phosphate. Its pathway is metabolic intermediate biosynthesis; chorismate biosynthesis; chorismate from D-erythrose 4-phosphate and phosphoenolpyruvate: step 7/7. Functionally, catalyzes the anti-1,4-elimination of the C-3 phosphate and the C-6 proR hydrogen from 5-enolpyruvylshikimate-3-phosphate (EPSP) to yield chorismate, which is the branch point compound that serves as the starting substrate for the three terminal pathways of aromatic amino acid biosynthesis. This reaction introduces a second double bond into the aromatic ring system. In Methylobacillus flagellatus (strain ATCC 51484 / DSM 6875 / VKM B-1610 / KT), this protein is Chorismate synthase.